The chain runs to 1484 residues: Cystic fibrosis transmembrane conductance regulator (1484 aa).

Topologically, residues 1–77 are cytoplasmic; the sequence is MQRSPLERAN…KLINALRRCF (77 aa). Residues 78–98 form a helical membrane-spanning segment; that stretch reads FWRFMFYGLLLYLGEVTKAVQ. Residues 81-365 enclose the ABC transmembrane type-1 1 domain; that stretch reads FMFYGLLLYL…WAVQMWYDSI (285 aa). At 99–122 the chain is on the extracellular side; the sequence is PLLLGRIIASYDPDNAHERSIAYY. A helical membrane pass occupies residues 123–146; sequence LGIGLCLLFIVRTLLLHPAVFGLH. Residues 147–195 are Cytoplasmic-facing; sequence HIGMQMRIALFSLIYKKTLKLSSRVLDKISTGQLVSLLSNNLNKFDEGL. A helical membrane pass occupies residues 196–216; the sequence is ALAHFVWIAPLQVMLLMGLLW. Residues 217–222 lie on the Extracellular side of the membrane; sequence DLLQAS. A helical transmembrane segment spans residues 223 to 243; it reads AFCGLAVLVVLVLFQAWLGHR. Residues 244–298 are Cytoplasmic-facing; sequence MMKYRDRRAGKINERLVITAEIIENIQSVKAYCWEEAMENMIESLRETELKLTRK. The helical transmembrane segment at 299-319 threads the bilayer; sequence AAYMRYFNSSAFFFSGFFVVF. At 320-339 the chain is on the extracellular side; sequence LSVLPSMLTKGIVLRKIFTT. The helical transmembrane segment at 340–358 threads the bilayer; it reads ISFCIVLRMAVTRQFPWAV. The Cytoplasmic segment spans residues 359–859; it reads QMWYDSIGAI…YLRYMTIHKK (501 aa). ATP is bound by residues Trp-401, Ser-434, 458–465, and Gln-493; that span reads GSTGAGKT. The ABC transporter 1 domain maps to 423-646; it reads SDDKNLIFSN…RPDFSSKLMG (224 aa). The S-palmitoyl cysteine moiety is linked to residue Cys-524. A phosphoserine mark is found at Ser-549 and Ser-660. Residues 654–832 are disordered R region; sequence SAERRNSILT…EEINEEDLKE (179 aa). Ser-670 is subject to Phosphoserine; by PKA. Ser-686 is modified (phosphoserine). Residue Lys-688 forms a Glycyl lysine isopeptide (Lys-Gly) (interchain with G-Cter in ubiquitin) linkage. A phosphoserine mark is found at Ser-700, Ser-712, Ser-737, Ser-768, Ser-791, Ser-796, and Ser-814. Residues 860-880 traverse the membrane as a helical segment; it reads LIFVLMMCLVIFLIEVAASLV. An ABC transmembrane type-1 2 domain is found at 860–1159; sequence LIFVLMMCLV…AVNASIDVDS (300 aa). At 881-922 the chain is on the extracellular side; that stretch reads GLCLFKDGASRMNSTSNLNHTSTLDWFAVIVTNTSTYYMFYI. Residues Asn-893, Asn-899, and Asn-913 are each glycosylated (N-linked (GlcNAc...) asparagine). A discontinuously helical membrane pass occupies residues 923–943; that stretch reads YVGVADTLLALGFLRGLPLVH. The Cytoplasmic segment spans residues 944-994; it reads SLISVSKILHQKMLHSVLQAPMSTFNTLKTGSILNRFSKDMAILDDLLPLT. The helical transmembrane segment at 995-1015 threads the bilayer; sequence IFDFIQLLLIVIGAVTVVSAL. Topologically, residues 1016 to 1017 are extracellular; sequence QP. A helical transmembrane segment spans residues 1018-1038; it reads YIFLASVPVVIAFVLLRAYFL. Residues 1039–1099 are Cytoplasmic-facing; that stretch reads RTSQQLKQLE…TANWFLYLST (61 aa). A helical transmembrane segment spans residues 1100-1120; that stretch reads LRWFQMRIEMVFVIFFILVTF. Topologically, residues 1121 to 1134 are extracellular; it reads ISILTTGDGEGKVG. The chain crosses the membrane as a helical span at residues 1135 to 1155; it reads IVLTLAMNIMGTLQWAVNASI. Residues 1156 to 1484 are Cytoplasmic-facing; the sequence is DVDSLMRSVS…TEEEVQDTRL (329 aa). The ABC transporter 2 domain occupies 1212 to 1445; sequence MTVQDLTAKY…KSVFKQAISH (234 aa). ATP-binding positions include Tyr-1221 and 1246–1253; that span reads GRTGSGKS. Residues 1388-1484 are interaction with GORASP2; the sequence is KTLKQAFTNC…TEEEVQDTRL (97 aa). A lipid anchor (S-palmitoyl cysteine) is attached at Cys-1397. Phosphoserine occurs at positions 1446 and 1460. Positions 1463 to 1484 are disordered; sequence LSRPKITALQEETEEEVQDTRL. Residues 1473–1484 show a composition bias toward acidic residues; the sequence is EETEEEVQDTRL. The PDZ-binding signature appears at 1482–1484; sequence TRL.

Belongs to the ABC transporter superfamily. ABCC family. CFTR transporter (TC 3.A.1.202) subfamily. In terms of assembly, monomer; does not require oligomerization for channel activity. May form oligomers in the membrane. Interacts with SLC26A3, SLC26A6 and NHERF1. Interacts with SHANK2. Interacts with MYO6. Interacts (via C-terminus) with GOPC (via PDZ domain); this promotes CFTR internalization and thereby decreases channel activity. Interacts with SLC4A7 through NHERF1. Found in a complex with MYO5B and RAB11A. Interacts with ANO1. Interacts with SLC26A8. Interacts with AHCYL1; the interaction increases CFTR activity. Interacts with CSE1L. The core-glycosylated form interacts with GORASP2 (via PDZ GRASP-type 1 domain) in respone to ER stress. Interacts with MARCHF2; the interaction leads to CFTR ubiqtuitination and degradation. Interacts with ADGRG2. N-glycosylated. In terms of processing, phosphorylated; cAMP treatment promotes phosphorylation and activates the channel. Dephosphorylation decreases the ATPase activity (in vitro). Phosphorylation at PKA sites activates the channel. Phosphorylation at PKC sites enhances the response to phosphorylation by PKA. Phosphorylated by AMPK; this inhibits channel activity. Post-translationally, ubiquitinated, leading to its degradation in the lysosome. Deubiquitination by USP10 in early endosomes enhances its endocytic recycling to the cell membrane. Ubiquitinated by RNF185 during ER stress. Ubiquitinated by MARCHF2.

The protein localises to the apical cell membrane. Its subcellular location is the early endosome membrane. It localises to the cell membrane. It is found in the recycling endosome membrane. The protein resides in the endoplasmic reticulum membrane. The protein localises to the nucleus. It catalyses the reaction ATP + H2O + closed Cl(-) channel = ADP + phosphate + open Cl(-) channel.. It carries out the reaction chloride(in) = chloride(out). The enzyme catalyses hydrogencarbonate(in) = hydrogencarbonate(out). The catalysed reaction is ATP + H2O = ADP + phosphate + H(+). In terms of biological role, epithelial ion channel that plays an important role in the regulation of epithelial ion and water transport and fluid homeostasis. Mediates the transport of chloride ions across the cell membrane. Possesses an intrinsic ATPase activity and utilizes ATP to gate its channel; the passive flow of anions through the channel is gated by cycles of ATP binding and hydrolysis by the ATP-binding domains. The ion channel is also permeable to HCO(3)(-); selectivity depends on the extracellular chloride concentration. Exerts its function also by modulating the activity of other ion channels and transporters. Contributes to the regulation of the pH and the ion content of the epithelial fluid layer. Modulates the activity of the epithelial sodium channel (ENaC) complex, in part by regulating the cell surface expression of the ENaC complex. May regulate bicarbonate secretion and salvage in epithelial cells by regulating the transporter SLC4A7. Can inhibit the chloride channel activity of ANO1. Plays a role in the chloride and bicarbonate homeostasis during sperm epididymal maturation and capacitation. The protein is Cystic fibrosis transmembrane conductance regulator of Ornithorhynchus anatinus (Duckbill platypus).